We begin with the raw amino-acid sequence, 82 residues long: Cytochrome b559 subunit alpha (82 aa).

The chain crosses the membrane as a helical span at residues 21–35; that stretch reads VIHSITIPSLFIAGW. His-23 lines the heme pocket.

This sequence belongs to the PsbE/PsbF family. Heterodimer of an alpha subunit and a beta subunit. PSII is composed of 1 copy each of membrane proteins PsbA, PsbB, PsbC, PsbD, PsbE, PsbF, PsbH, PsbI, PsbJ, PsbK, PsbL, PsbM, PsbT, PsbX, PsbY, PsbZ, Psb30/Ycf12, at least 3 peripheral proteins of the oxygen-evolving complex and a large number of cofactors. It forms dimeric complexes. The cofactor is heme b.

Its subcellular location is the plastid. It localises to the chloroplast thylakoid membrane. Functionally, this b-type cytochrome is tightly associated with the reaction center of photosystem II (PSII). PSII is a light-driven water:plastoquinone oxidoreductase that uses light energy to abstract electrons from H(2)O, generating O(2) and a proton gradient subsequently used for ATP formation. It consists of a core antenna complex that captures photons, and an electron transfer chain that converts photonic excitation into a charge separation. The chain is Cytochrome b559 subunit alpha from Stigeoclonium helveticum (Green alga).